Consider the following 91-residue polypeptide: UPF0250 protein HCH_05838 (91 aa).

It belongs to the UPF0250 family.

This Hahella chejuensis (strain KCTC 2396) protein is UPF0250 protein HCH_05838.